Consider the following 374-residue polypeptide: Resuscitation-promoting factor Rpf2 (374 aa).

Residues 1–40 (MAPHQKSRINRINSTRSVPLRLATGGVLATLLIGGVTAAA) form the signal peptide. The G5 domain occupies 210-290 (IDRVDNTEIT…PATISRGTKT (81 aa)). The segment at 228-252 (PTYVDDPEAPAGDETVVEEGAPGTK) is disordered.

This sequence belongs to the transglycosylase family. Rpf subfamily. Glycosylated; by Pmt, by at least mannose and galactose. Other unidentified sugars may also be present. Post-translationally, may be subject to proteolytic cleavage as multiple shorter forms are detected in gels. In terms of processing, at least 3 non-glycosylated protein isoforms of 35, 40 and 42 kDa are seen in gels.

The protein resides in the secreted. The protein localises to the cell surface. Functionally, factor that stimulates resuscitation of dormant cells. Has peptidoglycan (PG) hydrolytic activity. Active in the pM concentration range. Has little to no effect on actively-growing cells. PG fragments could either directly activate the resuscitation pathway of dormant bacteria or serve as a substrate for endogenous Rpf, resulting in low molecular weight products with resuscitation activity. This Corynebacterium glutamicum (strain ATCC 13032 / DSM 20300 / JCM 1318 / BCRC 11384 / CCUG 27702 / LMG 3730 / NBRC 12168 / NCIMB 10025 / NRRL B-2784 / 534) protein is Resuscitation-promoting factor Rpf2 (rpf2).